Consider the following 181-residue polypeptide: Protein Syd (181 aa).

The protein belongs to the Syd family.

It is found in the cell inner membrane. Interacts with the SecY protein in vivo. May bind preferentially to an uncomplexed state of SecY, thus functioning either as a chelating agent for excess SecY in the cell or as a regulatory factor that negatively controls the translocase function. The sequence is that of Protein Syd from Klebsiella pneumoniae subsp. pneumoniae (strain ATCC 700721 / MGH 78578).